The sequence spans 340 residues: MSSAVVHGDDLDMEPTLQSVLNQNTLRWIFVGGKGGVGKTTTSCSLAIQLAKVRKSVLLISTDPAHNLSDAFGQKFGKEARLIDGYSNLSAMEIDPNGSIQDLLATGDGQGEDPMAGLGMGNMMQDLAFSIPGVDEAMSFAEVLKQVKSLSYEVIVFDTAPTGHTLRFLQFPTVLEKALAKLSQLSTQFGPMLNSILGARGGLPGGQNMDELLQKMESLRETISEVNTQFKNPDMTTFVCVCIAEFLSLYETERMIQELTSYNIDTHSIVVNQLLFPKEGSDCEQCTARRKMQKKYLDQIEELYEDFNVVRMPMLVEEVRGKEKLEKFSEMLVTPYVPPQ.

34–41 lines the ATP pocket; it reads KGGVGKTT. The active site involves aspartate 63. Positions 245 and 272 each coordinate ATP. Cysteine 283 and cysteine 286 together coordinate Zn(2+).

It belongs to the arsA ATPase family. In terms of assembly, homodimer.

It is found in the cytoplasm. The protein localises to the endoplasmic reticulum. In terms of biological role, ATPase required for the post-translational delivery of tail-anchored (TA) proteins to the endoplasmic reticulum. Recognizes and selectively binds the transmembrane domain of TA proteins in the cytosol. This complex then targets to the endoplasmic reticulum by membrane-bound receptors, where the tail-anchored protein is released for insertion. This process is regulated by ATP binding and hydrolysis. ATP binding drives the homodimer towards the closed dimer state, facilitating recognition of newly synthesized TA membrane proteins. ATP hydrolysis is required for insertion. Subsequently, the homodimer reverts towards the open dimer state, lowering its affinity for the membrane-bound receptor, and returning it to the cytosol to initiate a new round of targeting. The sequence is that of ATPase get3 (get3) from Penicillium rubens (strain ATCC 28089 / DSM 1075 / NRRL 1951 / Wisconsin 54-1255) (Penicillium chrysogenum).